The sequence spans 303 residues: Proteasome subunit beta (303 aa).

The propeptide at 1 to 64 (MTWPDRDTSA…VTPSDAVPHG (64 aa)) is removed in mature form; by autocatalysis. Residue Thr-65 is the Nucleophile of the active site.

It belongs to the peptidase T1B family. The 20S proteasome core is composed of 14 alpha and 14 beta subunits that assemble into four stacked heptameric rings, resulting in a barrel-shaped structure. The two inner rings, each composed of seven catalytic beta subunits, are sandwiched by two outer rings, each composed of seven alpha subunits. The catalytic chamber with the active sites is on the inside of the barrel. Has a gated structure, the ends of the cylinder being occluded by the N-termini of the alpha-subunits. Is capped by the proteasome-associated ATPase, ARC.

It localises to the cytoplasm. The enzyme catalyses Cleavage of peptide bonds with very broad specificity.. The protein operates within protein degradation; proteasomal Pup-dependent pathway. The formation of the proteasomal ATPase ARC-20S proteasome complex, likely via the docking of the C-termini of ARC into the intersubunit pockets in the alpha-rings, may trigger opening of the gate for substrate entry. Interconversion between the open-gate and close-gate conformations leads to a dynamic regulation of the 20S proteasome proteolysis activity. Component of the proteasome core, a large protease complex with broad specificity involved in protein degradation. The polypeptide is Proteasome subunit beta (Mycolicibacterium gilvum (strain PYR-GCK) (Mycobacterium gilvum (strain PYR-GCK))).